We begin with the raw amino-acid sequence, 419 residues long: Putative zinc metalloprotease spr0242 (419 aa).

Residue His18 coordinates Zn(2+). Residue Glu19 is part of the active site. His22 lines the Zn(2+) pocket. Helical transmembrane passes span 169-191, 345-367, and 388-410; these read LITN…WVLI, ILYF…IPAL, and EIET…AVTW.

This sequence belongs to the peptidase M50B family. Requires Zn(2+) as cofactor.

It localises to the cell membrane. This is Putative zinc metalloprotease spr0242 from Streptococcus pneumoniae (strain ATCC BAA-255 / R6).